The sequence spans 175 residues: MAEQLYATLKTNRGDIEIRLLPNHAPKTVRNFVELATGQREWVNPETGEKSTDRLYDGTVFHRVISGFMIQGGDPLGNGTGGPGYKFADEFHPELGFTQPYLLAMANAGPGTNGSQFFLTVSPTAWLTGKHTIFGEVSGEAGRKVVDAIAATPTNPRTDRPLEDVVIESVVVETR.

In terms of domain architecture, PPIase cyclophilin-type spans 3–172 (EQLYATLKTN…EDVVIESVVV (170 aa)).

Belongs to the cyclophilin-type PPIase family.

Its subcellular location is the cytoplasm. The catalysed reaction is [protein]-peptidylproline (omega=180) = [protein]-peptidylproline (omega=0). Inhibited by cyclosporin A (CsA). Functionally, PPIases accelerate the folding of proteins. It catalyzes the cis-trans isomerization of proline imidic peptide bonds in oligopeptides. The chain is Peptidyl-prolyl cis-trans isomerase B (cypB) from Streptomyces anulatus (Streptomyces chrysomallus).